Reading from the N-terminus, the 677-residue chain is Methionine--tRNA ligase (677 aa).

The 'HIGH' region signature appears at 15 to 25; the sequence is PYANGSIHLGH. Residues Cys146, Cys149, Cys159, and Cys162 each coordinate Zn(2+). The 'KMSKS' region motif lies at 333-337; sequence KMSKS. Lys336 lines the ATP pocket. One can recognise a tRNA-binding domain in the interval 575–677; it reads DFAKVDLRVA…AGAKPGHQVK (103 aa).

This sequence belongs to the class-I aminoacyl-tRNA synthetase family. MetG type 1 subfamily. Homodimer. It depends on Zn(2+) as a cofactor.

The protein localises to the cytoplasm. The enzyme catalyses tRNA(Met) + L-methionine + ATP = L-methionyl-tRNA(Met) + AMP + diphosphate. In terms of biological role, is required not only for elongation of protein synthesis but also for the initiation of all mRNA translation through initiator tRNA(fMet) aminoacylation. The sequence is that of Methionine--tRNA ligase from Escherichia coli (strain SE11).